The primary structure comprises 121 residues: MARIAGVDLPKKKRIEYGLTYIYGIGLFTSRKILDKVGISYDKRVHELSEDEAAAIRKEIQENYMVEGDLRKQVAMDIKALMDLGSFRGLRHRKGLPVRGQKTKTNARTRKGKRKTVGAKS.

Residues 95–121 (GLPVRGQKTKTNARTRKGKRKTVGAKS) form a disordered region.

It belongs to the universal ribosomal protein uS13 family. In terms of assembly, part of the 30S ribosomal subunit. Forms a loose heterodimer with protein S19. Forms two bridges to the 50S subunit in the 70S ribosome.

In terms of biological role, located at the top of the head of the 30S subunit, it contacts several helices of the 16S rRNA. In the 70S ribosome it contacts the 23S rRNA (bridge B1a) and protein L5 of the 50S subunit (bridge B1b), connecting the 2 subunits; these bridges are implicated in subunit movement. Contacts the tRNAs in the A and P-sites. The chain is Small ribosomal subunit protein uS13 from Campylobacter jejuni subsp. jejuni serotype O:6 (strain 81116 / NCTC 11828).